The following is a 457-amino-acid chain: MGAMAQNPPNLRPDLAPRLVIDSPRREGQPTIGMVSLGCPKALVDSERILTRLRAEGYAISPDYAGADAVIVNTCGFLDSAKAESLEAIGEALRENGRVIVTGCLGAEPDYITGAHPKVLAVTGPHQYEQVLDAVHGAVPPAPDPFVDLLPATGVRLTPRHFSYLKISEGCNHSCRFCIIPDMRGRLVSRPERAVLREAEKLVEAGVRELLVISQDTSAYGTDWKGPVRFPILPLARELGQLGAWVRLHYVYPYPHVRELIPLMAEGLILPYLDIPFQHAHPEVLKRMARPAAAARTLDEIAAWRRDCPDITLRSTFIVGYPGETEEEFQTLLDWLDEAQLDRVGCFQYENVAGARSNALPDHVAPELKQERWERFMQKAQAISEAKLAARIGQRLEVIVDEVDGEGATCRTKADAPEIDGNLFIDEGFEALSPGDLLTVEVEEAGEYDLWGRAVLV.

Residues 30-140 form the MTTase N-terminal domain; sequence PTIGMVSLGC…VLDAVHGAVP (111 aa). Positions 39, 75, 104, 171, 175, and 178 each coordinate [4Fe-4S] cluster. The Radical SAM core domain occupies 157–386; sequence LTPRHFSYLK…MQKAQAISEA (230 aa). Residues 389 to 456 enclose the TRAM domain; sequence AARIGQRLEV…EYDLWGRAVL (68 aa).

It belongs to the methylthiotransferase family. RimO subfamily. Requires [4Fe-4S] cluster as cofactor.

The protein resides in the cytoplasm. It carries out the reaction L-aspartate(89)-[ribosomal protein uS12]-hydrogen + (sulfur carrier)-SH + AH2 + 2 S-adenosyl-L-methionine = 3-methylsulfanyl-L-aspartate(89)-[ribosomal protein uS12]-hydrogen + (sulfur carrier)-H + 5'-deoxyadenosine + L-methionine + A + S-adenosyl-L-homocysteine + 2 H(+). Functionally, catalyzes the methylthiolation of an aspartic acid residue of ribosomal protein uS12. This Cereibacter sphaeroides (strain ATCC 17025 / ATH 2.4.3) (Rhodobacter sphaeroides) protein is Ribosomal protein uS12 methylthiotransferase RimO.